We begin with the raw amino-acid sequence, 66 residues long: Disk-determining factor A (66 aa).

Involved in cell-shape determination. Required for the formation of disks. The protein is Disk-determining factor A of Haloferax volcanii (strain ATCC 29605 / DSM 3757 / JCM 8879 / NBRC 14742 / NCIMB 2012 / VKM B-1768 / DS2) (Halobacterium volcanii).